A 334-amino-acid polypeptide reads, in one-letter code: Ornithine carbamoyltransferase (334 aa).

Residues 57 to 60, Gln84, Arg108, and 135 to 138 each bind carbamoyl phosphate; these read STRT and HPTQ. L-ornithine contacts are provided by residues Asn168, Asp232, and 236 to 237; that span reads SM. Carbamoyl phosphate contacts are provided by residues 274-275 and Arg321; that span reads CL.

This sequence belongs to the aspartate/ornithine carbamoyltransferase superfamily. OTCase family.

Its subcellular location is the cytoplasm. The catalysed reaction is carbamoyl phosphate + L-ornithine = L-citrulline + phosphate + H(+). It participates in amino-acid degradation; L-arginine degradation via ADI pathway; carbamoyl phosphate from L-arginine: step 2/2. Functionally, reversibly catalyzes the transfer of the carbamoyl group from carbamoyl phosphate (CP) to the N(epsilon) atom of ornithine (ORN) to produce L-citrulline. The protein is Ornithine carbamoyltransferase of Haemophilus influenzae (strain PittGG).